The sequence spans 146 residues: Hemoglobin subunit beta-2 (146 aa).

One can recognise a Globin domain in the interval 2 to 146 (EWTDFERATI…VVSSLGRQYH (145 aa)). Heme b-binding residues include His-63 and His-92.

The protein belongs to the globin family. As to quaternary structure, hb 2 is a heterotetramer of two alpha-2 and two beta-2 chains. Red blood cells.

Functionally, involved in oxygen transport from gills to the various peripheral tissues. The protein is Hemoglobin subunit beta-2 (hbb2) of Gobionotothen gibberifrons (Humped rockcod).